A 433-amino-acid polypeptide reads, in one-letter code: MSTVPTDHGVAALGEFVFECGQSVPDLEVAYETHGEFDGDNVVLVCHALTGSQNVARSPAPERNEGTRGAGQAGQARAWWDDIVGPGKAIDTTKYYVVCANVPGSCYGTTGPASERPADLDLPEEPDHDRWGTAFPPVQVEDWARSQRRLLDHLGVGRLRAVVGGSVGGMNVLEWAKRYPDDVDRVVAIATAGRLDAQCLALDAVARRAIRADPNWNGGNYYGEGRPSPDEGLALARQIGHIMYLSKASMERKFGRRSAGRDSLTREEGDLGLPPEPTAAFFPYREVESYLDYQAEGFSERFDANSYLYLTRAMDEYDLSAGHGTDADALAAFEGEALLMSFTADWHFTVEQSSSLAAAFRDRDVPVAHHVIDSDHGHDAFLVEPEHVGPPLRDFLVEGVGGRAVSDDGGGGGNDSARPERDHAPVHASLFKG.

In terms of domain architecture, AB hydrolase-1 spans 41 to 385 (NVVLVCHALT…HGHDAFLVEP (345 aa)). Positions 55 to 74 (VARSPAPERNEGTRGAGQAG) are disordered. The active-site Nucleophile is serine 166. Position 237 (arginine 237) interacts with substrate. Catalysis depends on residues aspartate 345 and histidine 378. A substrate-binding site is contributed by aspartate 379. The segment at 403–433 (RAVSDDGGGGGNDSARPERDHAPVHASLFKG) is disordered.

This sequence belongs to the AB hydrolase superfamily. MetX family. In terms of assembly, homodimer.

The protein localises to the cytoplasm. The enzyme catalyses L-homoserine + acetyl-CoA = O-acetyl-L-homoserine + CoA. It participates in amino-acid biosynthesis; L-methionine biosynthesis via de novo pathway; O-acetyl-L-homoserine from L-homoserine: step 1/1. In terms of biological role, transfers an acetyl group from acetyl-CoA to L-homoserine, forming acetyl-L-homoserine. The chain is Homoserine O-acetyltransferase from Halorubrum lacusprofundi (strain ATCC 49239 / DSM 5036 / JCM 8891 / ACAM 34).